Consider the following 95-residue polypeptide: uncharacterized protein (95 aa).

Residues 1–24 constitute a signal peptide (or 21); that stretch reads MKKLATLTALAGALTMAVATAAQA. The segment covering 55-89 has biased composition (basic and acidic residues); sequence EGKCGADKAKSAEGKCGEGKCGADKAKSAEGKCGE. The disordered stretch occupies residues 55–95; sequence EGKCGADKAKSAEGKCGEGKCGADKAKSAEGKCGEGKCGSK.

This is an uncharacterized protein from Haemophilus influenzae (strain ATCC 51907 / DSM 11121 / KW20 / Rd).